The following is a 238-amino-acid chain: NAD(P)H-quinone oxidoreductase subunit K 1 (238 aa).

Residues Cys54, Cys55, Cys119, and Cys150 each coordinate [4Fe-4S] cluster.

It belongs to the complex I 20 kDa subunit family. NDH-1 can be composed of about 15 different subunits; different subcomplexes with different compositions have been identified which probably have different functions. [4Fe-4S] cluster is required as a cofactor.

Its subcellular location is the cellular thylakoid membrane. The enzyme catalyses a plastoquinone + NADH + (n+1) H(+)(in) = a plastoquinol + NAD(+) + n H(+)(out). It carries out the reaction a plastoquinone + NADPH + (n+1) H(+)(in) = a plastoquinol + NADP(+) + n H(+)(out). Functionally, NDH-1 shuttles electrons from an unknown electron donor, via FMN and iron-sulfur (Fe-S) centers, to quinones in the respiratory and/or the photosynthetic chain. The immediate electron acceptor for the enzyme in this species is believed to be plastoquinone. Couples the redox reaction to proton translocation, and thus conserves the redox energy in a proton gradient. Cyanobacterial NDH-1 also plays a role in inorganic carbon-concentration. This is NAD(P)H-quinone oxidoreductase subunit K 1 from Cyanothece sp. (strain PCC 7425 / ATCC 29141).